We begin with the raw amino-acid sequence, 276 residues long: Phosphonates import ATP-binding protein PhnC (276 aa).

The 249-residue stretch at 5–253 (IRVERLNKTF…LLNDLYGADL (249 aa)) folds into the ABC transporter domain. ATP is bound at residue 37–44 (GASGSGKS).

This sequence belongs to the ABC transporter superfamily. Phosphonates importer (TC 3.A.1.9.1) family. The complex is composed of two ATP-binding proteins (PhnC), two transmembrane proteins (PhnE) and a solute-binding protein (PhnD).

The protein resides in the cell inner membrane. It catalyses the reaction phosphonate(out) + ATP + H2O = phosphonate(in) + ADP + phosphate + H(+). In terms of biological role, part of the ABC transporter complex PhnCDE involved in phosphonates import. Responsible for energy coupling to the transport system. The polypeptide is Phosphonates import ATP-binding protein PhnC (Stutzerimonas stutzeri (Pseudomonas stutzeri)).